We begin with the raw amino-acid sequence, 580 residues long: Xylulose kinase (580 aa).

Substrate-binding residues include His99, Arg170, Asp280, and Asn281. ATP contacts are provided by residues Trp355, 441–442, and Asn445; that span reads GA.

The protein belongs to the FGGY kinase family. As to quaternary structure, monomer.

It catalyses the reaction D-xylulose + ATP = D-xylulose 5-phosphate + ADP + H(+). Its function is as follows. Phosphorylates D-xylulose to produce D-xylulose 5-phosphate, a molecule that may play an important role in the regulation of glucose metabolism and lipogenesis. This chain is Xylulose kinase (XYLB), found in Pongo abelii (Sumatran orangutan).